A 314-amino-acid polypeptide reads, in one-letter code: tRNA dimethylallyltransferase (314 aa).

Residue 13 to 20 coordinates ATP; it reads GPTAVGKT. 15–20 is a binding site for substrate; it reads TAVGKT. An interaction with substrate tRNA region spans residues 38–41; sequence DSMQ.

Belongs to the IPP transferase family. In terms of assembly, monomer. Requires Mg(2+) as cofactor.

The enzyme catalyses adenosine(37) in tRNA + dimethylallyl diphosphate = N(6)-dimethylallyladenosine(37) in tRNA + diphosphate. Functionally, catalyzes the transfer of a dimethylallyl group onto the adenine at position 37 in tRNAs that read codons beginning with uridine, leading to the formation of N6-(dimethylallyl)adenosine (i(6)A). The polypeptide is tRNA dimethylallyltransferase (Bacillus subtilis (strain 168)).